A 320-amino-acid chain; its full sequence is Ferrochelatase (320 aa).

His194 and Glu275 together coordinate Fe cation.

The protein belongs to the ferrochelatase family. As to quaternary structure, monomer.

The protein localises to the cytoplasm. It carries out the reaction heme b + 2 H(+) = protoporphyrin IX + Fe(2+). Its pathway is porphyrin-containing compound metabolism; protoheme biosynthesis; protoheme from protoporphyrin-IX: step 1/1. Catalyzes the ferrous insertion into protoporphyrin IX. The polypeptide is Ferrochelatase (Escherichia coli O8 (strain IAI1)).